Here is a 69-residue protein sequence, read N- to C-terminus: Large ribosomal subunit protein uL29 (69 aa).

It belongs to the universal ribosomal protein uL29 family.

This chain is Large ribosomal subunit protein uL29, found in Oenococcus oeni (strain ATCC BAA-331 / PSU-1).